The following is a 338-amino-acid chain: Ketol-acid reductoisomerase (NADP(+)) (338 aa).

Residues 1–181 (MQVYYDKDCD…GGGRSGIIET (181 aa)) enclose the KARI N-terminal Rossmann domain. Residues 24-27 (YGSQ), Arg-47, Ser-50, Ser-52, and 82-85 (DEFQ) contribute to the NADP(+) site. Residue His-107 is part of the active site. Gly-133 lines the NADP(+) pocket. The KARI C-terminal knotted domain occupies 182-327 (TFKDETETDL…GKLRAMMPWI (146 aa)). Mg(2+) is bound by residues Asp-190, Glu-194, Glu-226, and Glu-230. Ser-251 is a binding site for substrate.

Belongs to the ketol-acid reductoisomerase family. The cofactor is Mg(2+).

It catalyses the reaction (2R)-2,3-dihydroxy-3-methylbutanoate + NADP(+) = (2S)-2-acetolactate + NADPH + H(+). The enzyme catalyses (2R,3R)-2,3-dihydroxy-3-methylpentanoate + NADP(+) = (S)-2-ethyl-2-hydroxy-3-oxobutanoate + NADPH + H(+). It participates in amino-acid biosynthesis; L-isoleucine biosynthesis; L-isoleucine from 2-oxobutanoate: step 2/4. It functions in the pathway amino-acid biosynthesis; L-valine biosynthesis; L-valine from pyruvate: step 2/4. Its function is as follows. Involved in the biosynthesis of branched-chain amino acids (BCAA). Catalyzes an alkyl-migration followed by a ketol-acid reduction of (S)-2-acetolactate (S2AL) to yield (R)-2,3-dihydroxy-isovalerate. In the isomerase reaction, S2AL is rearranged via a Mg-dependent methyl migration to produce 3-hydroxy-3-methyl-2-ketobutyrate (HMKB). In the reductase reaction, this 2-ketoacid undergoes a metal-dependent reduction by NADPH to yield (R)-2,3-dihydroxy-isovalerate. In Saccharophagus degradans (strain 2-40 / ATCC 43961 / DSM 17024), this protein is Ketol-acid reductoisomerase (NADP(+)).